A 331-amino-acid polypeptide reads, in one-letter code: Putative heat stress transcription factor A-6a (331 aa).

The tract at residues 135–160 (RRGAGTGSTTPRAVNCGGGGGEGEVE) is disordered. Residues 156–238 (EGEVERLRRD…VERKKRRMLA (83 aa)) adopt a coiled-coil conformation. Residues 162-212 (LRRDKEALARELARLRRQQQEARAQLLDMERRVRGTERRQEQCTEFLARAL) form a hydrophobic repeat HR-A/B region. The Nuclear localization signal signature appears at 230-235 (ERKKRR). A Nuclear export signal motif is present at residues 246–253 (LTFEALAL). The AHA1 signature appears at 270 to 279 (DMIWYELLGE). Residues 305–313 (AEPWEEMGE) carry the AHA2 motif.

This sequence belongs to the HSF family. Class A subfamily. Homotrimer. Exhibits temperature-dependent phosphorylation.

The protein localises to the cytoplasm. The protein resides in the nucleus. Its function is as follows. Transcriptional regulator that specifically binds DNA of heat shock promoter elements (HSE). The chain is Putative heat stress transcription factor A-6a (HSFA6A) from Oryza sativa subsp. japonica (Rice).